The chain runs to 499 residues: Cryptochrome-1 (499 aa).

FAD is bound by residues Arg-190, Ser-218, Ser-220, Gln-261, His-328, 360-362 (DAD), Cys-366, and Asn-369.

This sequence belongs to the DNA photolyase class-1 family. Interacts with tim and per; promoted by light conditions. FAD serves as cofactor.

It localises to the cytoplasm. The protein localises to the perinuclear region. The protein resides in the nucleus. Its function is as follows. Blue light-dependent regulator that is the input of the circadian feedback loop. Has no photolyase activity for cyclobutane pyrimidine dimers or 6-4 photoproducts. Regulation of expression by light suggests a role in photoreception for locomotor activity rhythms. Functions, together with per, as a transcriptional repressor required for the oscillation of peripheral circadian clocks and for the correct specification of clock cells. Genes directly activated by the transcription factors Clock (Clk) and cycle (cyc) are repressed by cry. This Culex quinquefasciatus (Southern house mosquito) protein is Cryptochrome-1.